The sequence spans 136 residues: Peptide deformylase (136 aa).

Fe cation contacts are provided by Cys-85 and His-126. Glu-127 is an active-site residue. His-130 contacts Fe cation.

This sequence belongs to the polypeptide deformylase family. Requires Fe(2+) as cofactor.

The enzyme catalyses N-terminal N-formyl-L-methionyl-[peptide] + H2O = N-terminal L-methionyl-[peptide] + formate. Functionally, removes the formyl group from the N-terminal Met of newly synthesized proteins. Requires at least a dipeptide for an efficient rate of reaction. N-terminal L-methionine is a prerequisite for activity but the enzyme has broad specificity at other positions. This chain is Peptide deformylase, found in Clostridium beijerinckii (strain ATCC 51743 / NCIMB 8052) (Clostridium acetobutylicum).